We begin with the raw amino-acid sequence, 177 residues long: uncharacterized protein (177 aa).

This sequence belongs to the flavoredoxin family. The cofactor is FMN.

This is an uncharacterized protein from Archaeoglobus fulgidus (strain ATCC 49558 / DSM 4304 / JCM 9628 / NBRC 100126 / VC-16).